Reading from the N-terminus, the 465-residue chain is WASH complex subunit 1 (465 aa).

The interval 1-54 is required for WASH complex assembly; the sequence is MTPVRMQHSLAGQTYAVPFIQPDLRREEAVQQMADALQYLQKVSGDIFSRISQQ. The tract at residues 1–167 is WHD1; that stretch reads MTPVRMQHSL…EGLGGLPSNI (167 aa). Lysine 220 participates in a covalent cross-link: Glycyl lysine isopeptide (Lys-Gly) (interchain with G-Cter in ubiquitin). Disordered regions lie at residues 297-359, 376-407, and 423-465; these read QDGV…VDPS, GKAK…QGGH, and ISGK…DWES. Over residues 302–314 the composition is skewed to pro residues; sequence TPPPPPPPPPPAP. Residues 349–465 form a VCA region; the sequence is QGAPREVVDP…AEEDEDDWES (117 aa). The WH2 domain maps to 361–383; that stretch reads GWATLLESIRQAGGIGKAKLRSM. The segment covering 382–398 has biased composition (basic and acidic residues); that stretch reads SMKERKLEKQQQKEQEQ. Over residues 424–436 the composition is skewed to gly residues; it reads SGKGPGAGEGPGG. A compositionally biased stretch (acidic residues) spans 456 to 465; sequence AEEDEDDWES.

Belongs to the WASH1 family. In terms of assembly, component of the WASH core complex also described as WASH regulatory complex (SHRC) composed of WASH (WASHC1, WASH2P or WASH3P), WASHC2 (WASHC2A or WASHC2C), WASHC3, WASHC4 and WASHC5. The WASH core complex associates via WASHC2 with the F-actin-capping protein dimer (formed by CAPZA1, CAPZA2 or CAPZA3 and CAPZB) in a transient or substoichiometric manner which was initially described as WASH complex. Interacts (via WHD1 region) with WASHC2C; the interaction is direct. Interacts with VPS35; mediates the association with the retromer CSC complex. Interacts with FKBP15. Interacts with alpha-tubulin. Interacts with BECN1; this interaction can be competed out by AMBRA1 binding. Interacts with BLOC1S2; may associate with the BLOC-1 complex. Interacts with tubulin gamma chain (TUBG1 or TUBG2). Interacts with EXOC1, EXOC4, EXOC8; in MMP14-positive endosomes in breast tumor cells; indicative for an association with the exocyst complex. Interacts with TBC1D23. Post-translationally, ubiquitinated at Lys-220 via 'Lys-63'-linked ubiquitin chains by the TRIM27:MAGEL2 E3 ubiquitin ligase complex, leading to promote endosomal F-actin assembly.

It is found in the early endosome membrane. Its subcellular location is the recycling endosome membrane. It localises to the late endosome. The protein localises to the cytoplasmic vesicle. The protein resides in the autophagosome. It is found in the cytoplasm. Its subcellular location is the cytoskeleton. It localises to the microtubule organizing center. The protein localises to the centrosome. The protein resides in the centriole. Acts as a component of the WASH core complex that functions as a nucleation-promoting factor (NPF) at the surface of endosomes, where it recruits and activates the Arp2/3 complex to induce actin polymerization, playing a key role in the fission of tubules that serve as transport intermediates during endosome sorting. Involved in endocytic trafficking of EGF. Involved in transferrin receptor recycling. Regulates the trafficking of endosomal alpha5beta1 integrin to the plasma membrane and involved in invasive cell migration. In T-cells involved in endosome-to-membrane recycling of receptors including T-cell receptor (TCR), CD28 and ITGAL; proposed to be implicated in T cell proliferation and effector function. In dendritic cells involved in endosome-to-membrane recycling of major histocompatibility complex (MHC) class II probably involving retromer and subsequently allowing antigen sampling, loading and presentation during T-cell activation. Involved in Arp2/3 complex-dependent actin assembly driving Salmonella typhimurium invasion independent of ruffling. Involved in the exocytosis of MMP14 leading to matrix remodeling during invasive migration and implicating late endosome-to-plasma membrane tubular connections and cooperation with the exocyst complex. Involved in negative regulation of autophagy independently from its role in endosomal sorting by inhibiting BECN1 ubiquitination to inactivate PIK3C3/Vps34 activity. The chain is WASH complex subunit 1 from Homo sapiens (Human).